We begin with the raw amino-acid sequence, 199 residues long: Zinc finger matrin-type protein 2 (199 aa).

Ala2 carries the N-acetylalanine modification. Residues Lys8, Lys36, Lys39, Lys45, Lys55, Lys61, Lys64, Lys70, Lys102, and Lys123 each participate in a glycyl lysine isopeptide (Lys-Gly) (interchain with G-Cter in SUMO2) cross-link. The tract at residues 27–46 (KRLTEEREKKDGKPVQPVKR) is disordered. Residues 80–104 (YYCNVCDCVVKDSINFLDHINGKKH) form a Matrin-type zinc finger. The segment covering 150-173 (REEEEKAKAYKKEKQKEKKRRAEE) has biased composition (basic and acidic residues). The disordered stretch occupies residues 150 to 175 (REEEEKAKAYKKEKQKEKKRRAEEDL).

As to quaternary structure, component of the spliceosome B complex.

It localises to the nucleus. Its function is as follows. Involved in pre-mRNA splicing as a component of the spliceosome. The protein is Zinc finger matrin-type protein 2 (ZMAT2) of Homo sapiens (Human).